Consider the following 902-residue polypeptide: Alanine--tRNA ligase (902 aa).

Zn(2+) contacts are provided by His-567, His-571, Cys-671, and His-675.

The protein belongs to the class-II aminoacyl-tRNA synthetase family. Zn(2+) is required as a cofactor.

The protein resides in the cytoplasm. The catalysed reaction is tRNA(Ala) + L-alanine + ATP = L-alanyl-tRNA(Ala) + AMP + diphosphate. In terms of biological role, catalyzes the attachment of alanine to tRNA(Ala) in a two-step reaction: alanine is first activated by ATP to form Ala-AMP and then transferred to the acceptor end of tRNA(Ala). Also edits incorrectly charged Ser-tRNA(Ala) and Gly-tRNA(Ala) via its editing domain. The chain is Alanine--tRNA ligase from Mycoplasmoides gallisepticum (strain R(low / passage 15 / clone 2)) (Mycoplasma gallisepticum).